The primary structure comprises 44 residues: U9-ctenitoxin-Co1a (44 aa).

Cystine bridges form between cysteine 3/cysteine 17, cysteine 10/cysteine 23, cysteine 16/cysteine 33, and cysteine 25/cysteine 31.

As to expression, expressed by the venom gland.

It is found in the secreted. Its function is as follows. Insecticidal neurotoxin that reversibly inhibits the N-methyl-D-aspartate (NMDA)-subtype of ionotropic glutamate receptor (GRIN) and inhibits inactivation of insect sodium channels (Nav). In vivo, is highly toxic to insects. This chain is U9-ctenitoxin-Co1a, found in Ctenus ornatus (Brazilian spider).